Here is a 228-residue protein sequence, read N- to C-terminus: 2,3-bisphosphoglycerate-dependent phosphoglycerate mutase (228 aa).

Residues 8–15, 21–22, Arg60, 87–90, Lys98, 114–115, and 183–184 contribute to the substrate site; these read RHGLSEWN, TG, ERHY, RR, and GN. Residue His9 is the Tele-phosphohistidine intermediate of the active site. Glu87 acts as the Proton donor/acceptor in catalysis.

It belongs to the phosphoglycerate mutase family. BPG-dependent PGAM subfamily.

The catalysed reaction is (2R)-2-phosphoglycerate = (2R)-3-phosphoglycerate. The protein operates within carbohydrate degradation; glycolysis; pyruvate from D-glyceraldehyde 3-phosphate: step 3/5. Catalyzes the interconversion of 2-phosphoglycerate and 3-phosphoglycerate. The sequence is that of 2,3-bisphosphoglycerate-dependent phosphoglycerate mutase from Enterococcus faecalis (strain ATCC 700802 / V583).